A 154-amino-acid polypeptide reads, in one-letter code: Phosphopantetheine adenylyltransferase (154 aa).

This sequence belongs to the eukaryotic CoaD family.

Its subcellular location is the cytoplasm. The enzyme catalyses (R)-4'-phosphopantetheine + ATP + H(+) = 3'-dephospho-CoA + diphosphate. It participates in cofactor biosynthesis; coenzyme A biosynthesis. Functionally, reversibly transfers an adenylyl group from ATP to 4'-phosphopantetheine, yielding dephospho-CoA (dPCoA) and pyrophosphate. The sequence is that of Phosphopantetheine adenylyltransferase from Methanosarcina mazei (strain ATCC BAA-159 / DSM 3647 / Goe1 / Go1 / JCM 11833 / OCM 88) (Methanosarcina frisia).